We begin with the raw amino-acid sequence, 397 residues long: Mannan endo-1,4-beta-mannosidase 1 (397 aa).

The N-terminal stretch at Met-1–Ala-23 is a signal peptide. Trp-83 and Asn-198 together coordinate substrate. Glu-199 functions as the Proton donor in the catalytic mechanism. Tyr-276 provides a ligand contact to substrate. The Nucleophile role is filled by Glu-316. Trp-354 provides a ligand contact to substrate.

It belongs to the glycosyl hydrolase 5 (cellulase A) family.

It localises to the secreted. The enzyme catalyses Random hydrolysis of (1-&gt;4)-beta-D-mannosidic linkages in mannans, galactomannans and glucomannans.. This Solanum lycopersicum (Tomato) protein is Mannan endo-1,4-beta-mannosidase 1 (MAN1).